A 434-amino-acid chain; its full sequence is Protein translocase subunit SecY (434 aa).

Helical transmembrane passes span 19–39 (LFTLFVLFLFRVGSYLPIPGI), 73–93 (IFMLSIGPYISASIIVQLLVY), 117–137 (YLTIVAAVVQGYATSLYAKGI), 148–168 (YIFVAILTVTTGTFILLWFGE), 179–199 (TSLIIFSGIVVRLQAALFNLF), 209–229 (VNPVFVILIISIFILVVILII), 264–284 (VLPVIFASVLITLPLQILSGF), 300–320 (PNGFYYTFLNVILIIGFTYFY), 362–382 (FSGSIFLSIIAIIPFLVQNIF), and 391–411 (IMGGSSLLIMVGVALDTLIHI).

This sequence belongs to the SecY/SEC61-alpha family. Component of the Sec protein translocase complex. Heterotrimer consisting of SecY, SecE and SecG subunits. The heterotrimers can form oligomers, although 1 heterotrimer is thought to be able to translocate proteins. Interacts with the ribosome. Interacts with SecDF, and other proteins may be involved. Interacts with SecA.

Its subcellular location is the cell inner membrane. In terms of biological role, the central subunit of the protein translocation channel SecYEG. Consists of two halves formed by TMs 1-5 and 6-10. These two domains form a lateral gate at the front which open onto the bilayer between TMs 2 and 7, and are clamped together by SecE at the back. The channel is closed by both a pore ring composed of hydrophobic SecY resides and a short helix (helix 2A) on the extracellular side of the membrane which forms a plug. The plug probably moves laterally to allow the channel to open. The ring and the pore may move independently. This Borreliella burgdorferi (strain ATCC 35210 / DSM 4680 / CIP 102532 / B31) (Borrelia burgdorferi) protein is Protein translocase subunit SecY.